The sequence spans 1627 residues: Pleckstrin homology domain-containing family G member 4B (1627 aa).

Disordered regions lie at residues 211–349 (YSSC…VQPR), 381–475 (LTGA…GQAV), 501–537 (VSTD…GTGD), 959–1008 (SEAA…PAQP), 1049–1111 (TTAH…SKGL), and 1124–1159 (PLWQ…QVGS). The span at 241 to 251 (GSASCPDTLTS) shows a compositional bias: polar residues. Basic and acidic residues-rich tracts occupy residues 262–273 (QLRHLPYPERAE) and 310–322 (ERPD…DRPK). The span at 465–474 (RPGGHLGGQA) shows a compositional bias: gly residues. Residues 975–985 (PKHERAQEAMR) show a composition bias toward basic and acidic residues. Residues 1057–1068 (SACSSEPTQTLA) show a composition bias toward polar residues. The span at 1070-1081 (RPRKHPQKKMIK) shows a compositional bias: basic residues. Composition is skewed to polar residues over residues 1101–1111 (PDHTSVFSKGL) and 1133–1144 (PVTQSRSLSSPS). Positions 1161–1340 (RLRHIMAEMI…CFQLRHGNDL (180 aa)) constitute a DH domain. The 109-residue stretch at 1352–1460 (NLKEQGQLRC…WTDVIGRILW (109 aa)) folds into the PH domain. Residues 1519 to 1558 (KGTESQMRGSTAVSSSDHAAPFKRPHSTISDSSTSSSSSQ) form a disordered region. Residues 1521-1535 (TESQMRGSTAVSSSD) are compositionally biased toward polar residues. Over residues 1545-1558 (STISDSSTSSSSSQ) the composition is skewed to low complexity.

As to quaternary structure, found in a complex with ARHGEF11 and ARHGEF12; binding to ARHGEF11 and ARHGEF12 enhances CDC42 GEF activity of PLEKHG4B, and PLEKHG4B, in turn, inhibits ARHGEF11- and ARHGEF12-mediated RHOA activation. Interacts with ANXA2; this interaction is required for PLEKHG4B localization to cell-cell adhesions.

It localises to the basal cell membrane. Its subcellular location is the cell junction. The protein resides in the nucleus. It is found in the cytoplasm. Functionally, guanine nucleotide exchange factor (GEF) which specifically activates small GTPase CDC42 by exchanging bound GDP for free GTP. Plays a role in actin cytoskeletal remodeling in the late stage of cell-cell junction formation by regulating the contractility of actin filaments, which prompts the conversion from 'open' to 'closed' junctions. The chain is Pleckstrin homology domain-containing family G member 4B from Homo sapiens (Human).